The primary structure comprises 169 residues: Nascent polypeptide-associated complex subunit alpha (169 aa).

The region spanning 14 to 78 (NKNEKKAREM…AKIDNFSQKL (65 aa)) is the NAC-A/B domain. Residues 85-128 (IQSVSKSPEEIQKDMQLAADQAGDESAKPAAAAEEDDEAPVDAG) are disordered. The UBA domain occupies 130 to 169 (LSAEDIELVASQANVSKNKAIKALKEHNGDIVNAIMALSK).

Belongs to the NAC-alpha family. Part of the nascent polypeptide-associated complex (NAC), consisting of EGD2 and EGD1. NAC associates with ribosomes via EGD1.

Its subcellular location is the cytoplasm. It is found in the nucleus. In terms of biological role, component of the nascent polypeptide-associated complex (NAC), a dynamic component of the ribosomal exit tunnel, protecting the emerging polypeptides from interaction with other cytoplasmic proteins to ensure appropriate nascent protein targeting. The NAC complex also promotes mitochondrial protein import by enhancing productive ribosome interactions with the outer mitochondrial membrane and blocks the inappropriate interaction of ribosomes translating non-secretory nascent polypeptides with translocation sites in the membrane of the endoplasmic reticulum. EGD2 may also be involved in transcription regulation. This chain is Nascent polypeptide-associated complex subunit alpha (EGD2), found in Vanderwaltozyma polyspora (strain ATCC 22028 / DSM 70294 / BCRC 21397 / CBS 2163 / NBRC 10782 / NRRL Y-8283 / UCD 57-17) (Kluyveromyces polysporus).